The primary structure comprises 237 residues: Protein PetR (237 aa).

A Response regulatory domain is found at 8-121 (HLLIVDDDER…ELLLRINAIL (114 aa)). D57 is subject to 4-aspartylphosphate. The segment at residues 77 to 95 (ATPILLLTARGETRERIEG) is a DNA-binding region (H-T-H motif). Positions 132–236 (PKYLSLGPLR…VRGLGYMLAP (105 aa)) form a DNA-binding region, ompR/PhoB-type.

Necessary for photosynthetic and respiratory growth. Probable promoter-specific protein mediating the interaction between DNA and RNA polymerase. The sequence is that of Protein PetR (petR) from Rhodobacter capsulatus (strain ATCC BAA-309 / NBRC 16581 / SB1003).